Consider the following 740-residue polypeptide: NAD(P)H-quinone oxidoreductase subunit 5, chloroplastic (740 aa).

The next 16 membrane-spanning stretches (helical) occupy residues 9 to 29 (WIIPFIPLPVPILLGVGLLLF), 40 to 60 (WSFLSIFLLSIVMIFSLYLSI), 89 to 109 (IDPLSCIMVILITTVGIFVLI), 125 to 145 (FAYMGFFNTSMLGLVTSSNLI), 147 to 167 (IYFFWELVGMCSYLLIGFWFT), 185 to 205 (GDFGLLLGILGLYWVTGSFEF), 221 to 241 (VNLLFLTLCAFLFFMGPIAKS), 258 to 278 (TPISALIHAATMVAAGIFLVA), 283 to 303 (LFIVIPSIMYIISLIGIITIL), 327 to 347 (LGYMMLALGMGSYRSALFHLI), 354 to 374 (ALLFLGSGSIIHSMEALVGYS), 396 to 416 (TAFLLGTLSLCGIPPLACFWS), 425 to 445 (LLFSPIFAIIACSTAGLTAFY), 547 to 567 (ILFPMLVLLLFTLFIGAIGIP), 606 to 626 (FSVSIAFFGIFIAYWLYKPFY), and 718 to 738 (ISSYLFLYLSYVSLFFLFLKI).

This sequence belongs to the complex I subunit 5 family. As to quaternary structure, NDH is composed of at least 16 different subunits, 5 of which are encoded in the nucleus.

It is found in the plastid. The protein localises to the chloroplast thylakoid membrane. The enzyme catalyses a plastoquinone + NADH + (n+1) H(+)(in) = a plastoquinol + NAD(+) + n H(+)(out). It catalyses the reaction a plastoquinone + NADPH + (n+1) H(+)(in) = a plastoquinol + NADP(+) + n H(+)(out). Its function is as follows. NDH shuttles electrons from NAD(P)H:plastoquinone, via FMN and iron-sulfur (Fe-S) centers, to quinones in the photosynthetic chain and possibly in a chloroplast respiratory chain. The immediate electron acceptor for the enzyme in this species is believed to be plastoquinone. Couples the redox reaction to proton translocation, and thus conserves the redox energy in a proton gradient. This chain is NAD(P)H-quinone oxidoreductase subunit 5, chloroplastic (ndhF), found in Aethionema grandiflorum (Persian stone-cress).